A 562-amino-acid polypeptide reads, in one-letter code: Methionine--tRNA ligase, mitochondrial (562 aa).

The transit peptide at 1–10 (MLRSLALRTF) directs the protein to the mitochondrion. The 'HIGH' region motif lies at 43–53 (FYVNAAPHLGH). Positions 332 to 336 (KMSKS) match the 'KMSKS' region motif. Residue Lys335 coordinates ATP.

It belongs to the class-I aminoacyl-tRNA synthetase family.

The protein localises to the mitochondrion matrix. It catalyses the reaction tRNA(Met) + L-methionine + ATP = L-methionyl-tRNA(Met) + AMP + diphosphate. This Xenopus laevis (African clawed frog) protein is Methionine--tRNA ligase, mitochondrial (mars2).